The primary structure comprises 615 residues: DNA mismatch repair protein MutL (615 aa).

A disordered region spans residues 363 to 397 (FAEPAAREPVAPRYTPAPASGSRPAAPWPNAQPGY). The segment covering 364 to 391 (AEPAAREPVAPRYTPAPASGSRPAAPWP) has biased composition (low complexity).

This sequence belongs to the DNA mismatch repair MutL/HexB family.

Its function is as follows. This protein is involved in the repair of mismatches in DNA. It is required for dam-dependent methyl-directed DNA mismatch repair. May act as a 'molecular matchmaker', a protein that promotes the formation of a stable complex between two or more DNA-binding proteins in an ATP-dependent manner without itself being part of a final effector complex. In Shigella boydii serotype 4 (strain Sb227), this protein is DNA mismatch repair protein MutL.